An 815-amino-acid polypeptide reads, in one-letter code: Heme-copper oxidase subunit I+III (815 aa).

Positions 1–467 (MVSRLRGFLA…QLSTLGAFIF (467 aa)) are COX1. Residues 26–46 (LLYLVTSIAFLLIAGSLALLF) form a helical membrane-spanning segment. A Fe(II)-heme a-binding site is contributed by His-70. 18 consecutive transmembrane segments (helical) span residues 71 to 91 (GLIM…NYIV), 105 to 125 (LNAL…ASFF), 157 to 177 (LAIF…LVTI), 197 to 217 (ILFT…GGAL), 242 to 262 (LFWF…LGAM), 281 to 301 (LTAF…HMFI), 314 to 334 (ITTI…IFTL), 339 to 359 (LVYT…IIGG), 380 to 400 (VVAH…IAGL), 419 to 439 (IHFA…FALM), 463 to 483 (GAFI…YSLV), 580 to 600 (ALFG…VFLL), 637 to 657 (WVFI…YFFI), 683 to 703 (LINT…YLGV), 708 to 728 (YLIT…FLTV), 736 to 756 (LLIA…YVTT), 758 to 778 (AHAL…VKLF), and 791 to 811 (VLAV…VFPL). Cu cation is bound by residues His-248, Tyr-252, His-297, and His-298. Positions 248 to 252 (HPEVY) form a cross-link, 1'-histidyl-3'-tyrosine (His-Tyr). Position 383 (His-383) interacts with heme a3. Position 385 (His-385) interacts with Fe(II)-heme a. The tract at residues 545–815 (DVSNVPLSGG…TLVFPLYYLV (271 aa)) is COX3.

It in the N-terminal section; belongs to the heme-copper respiratory oxidase family. The protein in the C-terminal section; belongs to the cytochrome c oxidase subunit 3 family. It depends on heme as a cofactor. Requires Cu cation as cofactor.

Its subcellular location is the cell membrane. The protein is Heme-copper oxidase subunit I+III (aoxB) of Aeropyrum pernix (strain ATCC 700893 / DSM 11879 / JCM 9820 / NBRC 100138 / K1).